The following is a 453-amino-acid chain: Signal transduction histidine-protein kinase ArlS (453 aa).

Helical transmembrane passes span 14-34 (ITTL…IFFL) and 157-177 (FVAI…SYIF). Residues 179-232 (TQLTKPLVTMSNKMIQIRRDGFQNKLELKTNYEETDNLIDTFNDMMYQIEESFN) form the HAMP domain. Residues 240–453 (DASHELRTPL…QYTTFKIIFK (214 aa)) form the Histidine kinase domain. H243 is modified (phosphohistidine; by autocatalysis).

Post-translationally, autophosphorylated.

It localises to the cell membrane. The catalysed reaction is ATP + protein L-histidine = ADP + protein N-phospho-L-histidine.. In terms of biological role, member of the two-component regulatory system ArlS/ArlR. ArlS probably functions as a sensor protein kinase which is autophosphorylated at a histidine residue and transfers its phosphate group to ArlR. This chain is Signal transduction histidine-protein kinase ArlS (arlS), found in Staphylococcus haemolyticus (strain JCSC1435).